The primary structure comprises 212 residues: uncharacterized protein (212 aa).

G53, E74, and D97 together coordinate S-adenosyl-L-methionine.

It belongs to the methyltransferase superfamily. YrrT family.

Could be a S-adenosyl-L-methionine-dependent methyltransferase. This is an uncharacterized protein from Bacillus mycoides (strain KBAB4) (Bacillus weihenstephanensis).